Reading from the N-terminus, the 1624-residue chain is MSKRRMSVGQQTWALLCKNCLKKWRMKRQTLLEWLFSFLLVLFLYLFFSNLHQVHDTPQMSSMDLGRVDSFNDTNYVIAFAPESKTTQEIMNKVASAPFLKGRTIMGWPDEKSMDELDLNYSIDAVRVIFTDTFSYHLKFSWGHRIPMMKEHRDHSAHCQAVNEKMKCEGSEFWEKGFVAFQAAINAAIIEIATNHSVMEQLMSVTGVHMKILPFVAQGGVATDFFIFFCIISFSTFIYYVSVNVTQERQYITSLMTMMGLRESAFWLSWGLMYAGFILIMATLMALIVKSAQIVVLTGFVMVFTLFLLYGLSLITLAFLMSVLIKKPFLTGLVVFLLIVFWGILGFPALYTRLPAFLEWTLCLLSPFAFTVGMAQLIHLDYDVNSNAHLDSSQNPYLIIATLFMLVFDTLLYLVLTLYFDKILPAEYGHRCSPLFFLKSCFWFQHGRANHVVLENETDSDPTPNDCFEPVSPEFCGKEAIRIKNLKKEYAGKCERVEALKGVVFDIYEGQITALLGHSGAGKTTLLNILSGLSVPTSGSVTVYNHTLSRMADIENISKFTGFCPQSNVQFGFLTVKENLRLFAKIKGILPHEVEKEVQRVVQELEMENIQDILAQNLSGGQNRKLTFGIAILGDPQVLLLDEPTAGLDPLSRHRIWNLLKEGKSDRVILFSTQFIDEADILADRKVFISNGKLKCAGSSLFLKKKWGIGYHLSLHLNERCDPESITSLVKQHISDAKLTAQSEEKLVYILPLERTNKFPELYRDLDRCSNQGIEDYGVSITTLNEVFLKLEGKSTIDESDIGIWGQLQTDGAKDIGSLVELEQVLSSFHETRKTISGVALWRQQVCAIAKVRFLKLKKERKSLWTILLLFGISFIPQLLEHLFYESYQKSYPWELSPNTYFLSPGQQPQDPLTHLLVINKTGSTIDNFLHSLRRQNIAIEVDAFGTRNGTDDPSYNGAIIVSGDEKDHRFSIACNTKRLNCFPVLLDVISNGLLGIFNSSEHIQTDRSTFFEEHMDYEYGYRSNTFFWIPMAASFTPYIAMSSIGDYKKKAHSQLRISGLYPSAYWFGQALVDVSLYFLILLLMQIMDYIFSPEEIIFIIQNLLIQILCSIGYVSSLVFLTYVISFIFRNGRKNSGIWSFFFLIVVIFSIVATDLNEYGFLGLFFGTMLIPPFTLIGSLFIFSEISPDSMDYLGASESEIVYLALLIPYLHFLIFLFILRCLEMNCRKKLMRKDPVFRISPRSNAIFPNPEEPEGEEEDIQMERMRTVNAMAVRDFDETPVIIASCLRKEYAGKKKNCFSKRKKKIATRNVSFCVKKGEVIGLLGHNGAGKSTTIKMITGDTKPTAGQVILKGSGGGEPLGFLGYCPQENALWPNLTVRQHLEVYAAVKGLRKGDAMIAITRLVDALKLQDQLKAPVKTLSEGIKRKLCFVLSILGNPSVVLLDEPSTGMDPEGQQQMWQVIRATFRNTERGALLTTHYMAEAEAVCDRVAIMVSGRLRCIGSIQHLKSKFGKDYLLEMKLKNLAQMEPLHAEILRLFPQAAQQERFSSLMVYKLPVEDVRPLSQAFFKLEIVKQSFDLEEYSLSQSTLEQVFLELSKEQELGDLEEDFDPSVKWKLLLQEEP.

A helical membrane pass occupies residues 31–51 (LLEWLFSFLLVLFLYLFFSNL). 2 N-linked (GlcNAc...) asparagine glycosylation sites follow: Asn120 and Asn195. Transmembrane regions (helical) follow at residues 221–243 (VATD…YVSV), 269–289 (SWGL…ALIV), 300–320 (FVMV…LAFL), 329–349 (FLTG…GFPA), 354–374 (LPAF…TVGM), and 398–418 (LIIA…VLTL). The ABC transporter 1 domain occupies 481-716 (IRIKNLKKEY…WGIGYHLSLH (236 aa)). Position 517–524 (517–524 (GHSGAGKT)) interacts with ATP. Residues 864–884 (LWTILLLFGISFIPQLLEHLF) form a helical membrane-spanning segment. The N-linked (GlcNAc...) asparagine glycan is linked to Asn949. Transmembrane regions (helical) follow at residues 1026–1046 (TFFW…SSIG), 1065–1085 (AYWF…LLLM), 1108–1128 (ILCS…ISFI), 1136–1156 (SGIW…ATDL), 1163–1183 (GLFF…LFIF), and 1200–1220 (EIVY…LFIL). The region spanning 1288 to 1521 (LRKEYAGKKK…FGKDYLLEMK (234 aa)) is the ABC transporter 2 domain. 1326–1333 (GHNGAGKS) contributes to the ATP binding site.

It belongs to the ABC transporter superfamily. ABCA family. In terms of tissue distribution, widely expressed with higher expression in heart.

Its subcellular location is the membrane. In terms of biological role, transporter that may play a role in monocyte differentiation and lipid transport and homeostasis. This is ATP-binding cassette sub-family A member 9 (ABCA9) from Homo sapiens (Human).